A 372-amino-acid chain; its full sequence is NAD(P)H-quinone oxidoreductase subunit 1 (372 aa).

The next 8 membrane-spanning stretches (helical) occupy residues 27–47 (AVWMPLPMLLMLVGATIGVLI), 97–117 (ALFTLGPILVVIPVFLSYLIV), 128–148 (LGIGVFLWISLSSIAPIGLLM), 166–186 (AAQSISYEIPLALAVLAIAMM), 204–224 (ILGWNVWRQPVGLILFWIAAL), 254–274 (FALFYLGSYVNLVLSALMVAI), 308–328 (AVGITMVLLKAYFFIFLAILL), and 351–371 (VGLVNLLLTAGLKLTFPIAFG).

Belongs to the complex I subunit 1 family. As to quaternary structure, NDH-1 is composed of at least 11 different subunits.

Its subcellular location is the cellular thylakoid membrane. The catalysed reaction is a plastoquinone + NADH + (n+1) H(+)(in) = a plastoquinol + NAD(+) + n H(+)(out). It catalyses the reaction a plastoquinone + NADPH + (n+1) H(+)(in) = a plastoquinol + NADP(+) + n H(+)(out). Functionally, NDH-1 shuttles electrons from an unknown electron donor, via FMN and iron-sulfur (Fe-S) centers, to quinones in the respiratory and/or the photosynthetic chain. The immediate electron acceptor for the enzyme in this species is believed to be plastoquinone. Couples the redox reaction to proton translocation, and thus conserves the redox energy in a proton gradient. In Cyanothece sp. (strain PCC 7425 / ATCC 29141), this protein is NAD(P)H-quinone oxidoreductase subunit 1.